The following is a 217-amino-acid chain: Leucyl/phenylalanyl-tRNA--protein transferase (217 aa).

The protein belongs to the L/F-transferase family.

It localises to the cytoplasm. The catalysed reaction is N-terminal L-lysyl-[protein] + L-leucyl-tRNA(Leu) = N-terminal L-leucyl-L-lysyl-[protein] + tRNA(Leu) + H(+). It catalyses the reaction N-terminal L-arginyl-[protein] + L-leucyl-tRNA(Leu) = N-terminal L-leucyl-L-arginyl-[protein] + tRNA(Leu) + H(+). The enzyme catalyses L-phenylalanyl-tRNA(Phe) + an N-terminal L-alpha-aminoacyl-[protein] = an N-terminal L-phenylalanyl-L-alpha-aminoacyl-[protein] + tRNA(Phe). Its function is as follows. Functions in the N-end rule pathway of protein degradation where it conjugates Leu, Phe and, less efficiently, Met from aminoacyl-tRNAs to the N-termini of proteins containing an N-terminal arginine or lysine. In Caulobacter vibrioides (strain ATCC 19089 / CIP 103742 / CB 15) (Caulobacter crescentus), this protein is Leucyl/phenylalanyl-tRNA--protein transferase.